Consider the following 217-residue polypeptide: Uracil-DNA glycosylase (217 aa).

Residue aspartate 62 is the Proton acceptor of the active site.

The protein belongs to the uracil-DNA glycosylase (UDG) superfamily. UNG family.

Its subcellular location is the cytoplasm. The enzyme catalyses Hydrolyzes single-stranded DNA or mismatched double-stranded DNA and polynucleotides, releasing free uracil.. Functionally, excises uracil residues from the DNA which can arise as a result of misincorporation of dUMP residues by DNA polymerase or due to deamination of cytosine. This is Uracil-DNA glycosylase from Streptococcus pyogenes serotype M4 (strain MGAS10750).